We begin with the raw amino-acid sequence, 164 residues long: R-phycoerythrin alpha chain (164 aa).

(2R,3E)-phycoerythrobilin contacts are provided by Cys-82 and Cys-139.

The protein belongs to the phycobiliprotein family. In terms of assembly, heterodimer of an alpha and a beta chain. Contains two covalently linked bilin chromophores.

Its subcellular location is the plastid. It localises to the chloroplast thylakoid membrane. Light-harvesting photosynthetic bile pigment-protein from the phycobiliprotein complex. This Pyropia tenera (Nori) protein is R-phycoerythrin alpha chain (cpeA).